A 150-amino-acid chain; its full sequence is D-aminoacyl-tRNA deacylase (150 aa).

A Gly-cisPro motif, important for rejection of L-amino acids motif is present at residues 137-138 (GP).

It belongs to the DTD family. Homodimer.

The protein localises to the cytoplasm. The catalysed reaction is glycyl-tRNA(Ala) + H2O = tRNA(Ala) + glycine + H(+). It carries out the reaction a D-aminoacyl-tRNA + H2O = a tRNA + a D-alpha-amino acid + H(+). Its function is as follows. An aminoacyl-tRNA editing enzyme that deacylates mischarged D-aminoacyl-tRNAs. Also deacylates mischarged glycyl-tRNA(Ala), protecting cells against glycine mischarging by AlaRS. Acts via tRNA-based rather than protein-based catalysis; rejects L-amino acids rather than detecting D-amino acids in the active site. By recycling D-aminoacyl-tRNA to D-amino acids and free tRNA molecules, this enzyme counteracts the toxicity associated with the formation of D-aminoacyl-tRNA entities in vivo and helps enforce protein L-homochirality. The protein is D-aminoacyl-tRNA deacylase of Listeria innocua serovar 6a (strain ATCC BAA-680 / CLIP 11262).